We begin with the raw amino-acid sequence, 723 residues long: Aspartate--tRNA(Asp/Asn) ligase 1 (723 aa).

Position 206 (Glu206) interacts with L-aspartate. Positions 230 to 233 are aspartate; it reads QLFK. Arg252 is a binding site for L-aspartate. ATP contacts are provided by residues 252–254 and Gln261; that span reads RDE. His481 lines the L-aspartate pocket. Glu516 contributes to the ATP binding site. Arg523 is a binding site for L-aspartate. 568–571 contacts ATP; it reads GMDR.

This sequence belongs to the class-II aminoacyl-tRNA synthetase family. Type 1 subfamily. As to quaternary structure, homodimer.

The protein localises to the cytoplasm. It catalyses the reaction tRNA(Asx) + L-aspartate + ATP = L-aspartyl-tRNA(Asx) + AMP + diphosphate. Functionally, aspartyl-tRNA synthetase with relaxed tRNA specificity since it is able to aspartylate not only its cognate tRNA(Asp) but also tRNA(Asn). Reaction proceeds in two steps: L-aspartate is first activated by ATP to form Asp-AMP and then transferred to the acceptor end of tRNA(Asp/Asn). The chain is Aspartate--tRNA(Asp/Asn) ligase 1 from Syntrophus aciditrophicus (strain SB).